We begin with the raw amino-acid sequence, 276 residues long: tRNA (guanine-N(7)-)-methyltransferase (276 aa).

The segment at 1 to 36 is disordered; that stretch reads MAAETRNVAGAEAPPPQKRYYRQRAHSNPMADHTLR. N-acetylalanine is present on Ala2. Ser27 carries the phosphoserine; by PKB/AKT1 and RPS6KA3 modification. Positions 84, 107, 108, 109, 140, 141, and 160 each coordinate S-adenosyl-L-homocysteine. S-adenosyl-L-methionine-binding residues include Gly84 and Glu107. Residues Arg109, Asn140, Ala141, and Leu160 each contribute to the S-adenosyl-L-methionine site. Asp163 is an active-site residue. The interval 164–172 is alphaC helix; sequence PHFKRTKHK. 2 residues coordinate S-adenosyl-L-homocysteine: Thr238 and Glu240. S-adenosyl-L-methionine-binding residues include Thr238 and Glu240. The segment at 238 to 246 is alpha6 helix; the sequence is TEEGKKVLR.

This sequence belongs to the class I-like SAM-binding methyltransferase superfamily. TrmB family. As to quaternary structure, catalytic component of the METTL1-WDR4 complex, composed of METTL1 and WDR4. Post-translationally, phosphorylation at Ser-27 by PKB/AKT1 inactivates its methyltransferase activity via a steric interference mechanism in the active site that locally disrupts the catalytic center. Phosphorylation at Ser-27 does not affect the interaction with WDR4. In terms of tissue distribution, ubiquitous.

The protein localises to the nucleus. The enzyme catalyses guanosine(46) in tRNA + S-adenosyl-L-methionine = N(7)-methylguanosine(46) in tRNA + S-adenosyl-L-homocysteine. It catalyses the reaction a guanosine in mRNA + S-adenosyl-L-methionine = an N(7)-methylguanosine in mRNA + S-adenosyl-L-homocysteine. The catalysed reaction is a guanosine in miRNA + S-adenosyl-L-methionine = an N(7)-methylguanosine in miRNA + S-adenosyl-L-homocysteine. Its pathway is tRNA modification; N(7)-methylguanine-tRNA biosynthesis. In terms of biological role, catalytic component of METTL1-WDR4 methyltransferase complex that mediates the formation of N(7)-methylguanine in a subset of RNA species, such as tRNAs, mRNAs and microRNAs (miRNAs). Catalyzes the formation of N(7)-methylguanine at position 46 (m7G46) in a large subset of tRNAs that contain the 5'-RAGGU-3' motif within the variable loop. M7G46 interacts with C13-G22 in the D-loop to stabilize tRNA tertiary structure and protect tRNAs from decay. Also acts as a methyltransferase for a subset of internal N(7)-methylguanine in mRNAs. Internal N(7)-methylguanine methylation of mRNAs in response to stress promotes their relocalization to stress granules, thereby suppressing their translation. Also methylates a specific subset of miRNAs, such as let-7. N(7)-methylguanine methylation of let-7 miRNA promotes let-7 miRNA processing by disrupting an inhibitory secondary structure within the primary miRNA transcript (pri-miRNA). Acts as a regulator of embryonic stem cell self-renewal and differentiation. In Homo sapiens (Human), this protein is tRNA (guanine-N(7)-)-methyltransferase.